The following is a 196-amino-acid chain: Nodulation protein A (196 aa).

The protein belongs to the NodA family.

It is found in the cytoplasm. In terms of biological role, N-acyltransferase required for nodulation. Acts in the production of a small, heat-stable compound (Nod) that stimulates mitosis in various plant protoplasts. The sequence is that of Nodulation protein A from Sinorhizobium terangae.